Consider the following 49-residue polypeptide: Delta-actitoxin-Axm1a (49 aa).

3 disulfide bridges follow: C4-C46, C6-C36, and C29-C47.

The protein belongs to the sea anemone sodium channel inhibitory toxin family. Type I subfamily.

The protein localises to the secreted. It is found in the nematocyst. In terms of biological role, binds specifically to voltage-gated sodium channels (Nav) (site 3), thereby delaying their inactivation. This toxin retains the greatest capacity to discriminate between the cardiac (Nav1.5/SCN5A) and neuronal sodium channels (2.5 nM versus 120 nM, when electrophysiologically tested and 14 nM versus 400 nM, when tested by ion flux), whereas its paralog Anthopleurin-B has the highest affinity of all anemone toxins for the mammalian sodium channel. Its ability to differentiate between cardiac and skeletal channels appears to be associated with domain 4 of the channel. This toxin does not slow or inhibit closed-state inactivation of cardiac sodium channels, but selectively modifies inactivation from the open-state. It does not display phospholipid-binding activities, suggesting that the domain IV S3-S4 linker is located at the extracellular surface and not buried in the phospholipid bilayer. This chain is Delta-actitoxin-Axm1a, found in Anthopleura xanthogrammica (Giant green sea anemone).